Here is a 404-residue protein sequence, read N- to C-terminus: S-adenosylmethionine synthase (404 aa).

Residues 1–13 (MSQSRYFFTSESV) are compositionally biased toward polar residues. A disordered region spans residues 1-21 (MSQSRYFFTSESVSEGHPDKV). Position 17 (His17) interacts with ATP. Asp19 provides a ligand contact to Mg(2+). Glu45 is a binding site for K(+). Residues Glu58 and Gln101 each coordinate L-methionine. The flexible loop stretch occupies residues 101–111 (QSPDINRGVDR). ATP-binding positions include 172–174 (DAK), 245–246 (RF), Asp254, 260–261 (RK), Ala277, and Lys281. Asp254 contacts L-methionine. Lys285 is an L-methionine binding site.

It belongs to the AdoMet synthase family. In terms of assembly, homotetramer; dimer of dimers. It depends on Mg(2+) as a cofactor. K(+) is required as a cofactor.

It is found in the cytoplasm. The enzyme catalyses L-methionine + ATP + H2O = S-adenosyl-L-methionine + phosphate + diphosphate. It participates in amino-acid biosynthesis; S-adenosyl-L-methionine biosynthesis; S-adenosyl-L-methionine from L-methionine: step 1/1. Its function is as follows. Catalyzes the formation of S-adenosylmethionine (AdoMet) from methionine and ATP. The overall synthetic reaction is composed of two sequential steps, AdoMet formation and the subsequent tripolyphosphate hydrolysis which occurs prior to release of AdoMet from the enzyme. The chain is S-adenosylmethionine synthase from Chlorobium phaeobacteroides (strain DSM 266 / SMG 266 / 2430).